The following is a 385-amino-acid chain: GTPase Obg (385 aa).

The Obg domain maps to Met1–Leu159. Residues Ala160 to Glu333 form the OBG-type G domain. Residues Gly166–Ser173, Phe191–Ile195, Asp213–Gly216, Asn283–Asp286, and Ser314–Ile316 contribute to the GTP site. Residues Ser173 and Thr193 each contribute to the Mg(2+) site.

This sequence belongs to the TRAFAC class OBG-HflX-like GTPase superfamily. OBG GTPase family. As to quaternary structure, monomer. It depends on Mg(2+) as a cofactor.

Its subcellular location is the cytoplasm. Its function is as follows. An essential GTPase which binds GTP, GDP and possibly (p)ppGpp with moderate affinity, with high nucleotide exchange rates and a fairly low GTP hydrolysis rate. Plays a role in control of the cell cycle, stress response, ribosome biogenesis and in those bacteria that undergo differentiation, in morphogenesis control. In Pseudoalteromonas translucida (strain TAC 125), this protein is GTPase Obg.